A 233-amino-acid chain; its full sequence is Protein DOUBLE-STRAND BREAK FORMATION (233 aa).

In terms of assembly, interacts with PRD1; this interaction facilitates a binding to PRD3. Specifically expressed in buds.

Required for meiotic double-strand break (DSB) formation, the initial event for meiotic recombination. The chain is Protein DOUBLE-STRAND BREAK FORMATION from Arabidopsis thaliana (Mouse-ear cress).